The chain runs to 452 residues: Rhodopsin (452 aa).

The Extracellular segment spans residues 1-33; that stretch reads MGRDIPDNETWWYNPYMDIHPHWKQFDQVPAAV. Asn8 carries an N-linked (GlcNAc...) asparagine glycan. Residues 34–58 traverse the membrane as a helical segment; the sequence is YYSLGIFIAICGIIGCVGNGVVIYL. Over 59–70 the chain is Cytoplasmic; that stretch reads FTKTKSLQTPAN. Residues 71–97 traverse the membrane as a helical segment; sequence MFIINLAFSDFTFSLVNGFPLMTISCF. The Extracellular segment spans residues 98 to 109; that stretch reads MKYWVFGNAACK. An intrachain disulfide couples Cys108 to Cys186. Residues 110–131 traverse the membrane as a helical segment; that stretch reads VYGLIGGIFGLMSIMTMTMISI. The 'Ionic lock' involved in activated form stabilization motif lies at 132-134; the sequence is DRY. Residues 132 to 151 are Cytoplasmic-facing; the sequence is DRYNVIGRPMSASKKMSHRK. The helical transmembrane segment at 152–172 threads the bilayer; that stretch reads AFIMIIFVWIWSTIWAIGPIF. At 173–199 the chain is on the extracellular side; it reads GWGAYTLEGVLCNCSFDYITRDTTTRS. The helical transmembrane segment at 200–224 threads the bilayer; it reads NILCMYIFAFMCPIVVIFFCYFNIV. The Cytoplasmic portion of the chain corresponds to 225–261; that stretch reads MSVSNHEKEMAAMAKRLNAKELRKAQAGANAEMKLAK. The chain crosses the membrane as a helical span at residues 262–283; it reads ISIVIVTQFLLSWSPYAVVALL. Residues 284-293 lie on the Extracellular side of the membrane; sequence AQFGPIEWVT. Residues 294–315 traverse the membrane as a helical segment; it reads PYAAQLPVMFAKASAIHNPMIY. At Lys305 the chain carries N6-(retinylidene)lysine. Residues 316-452 are Cytoplasmic-facing; it reads SVSHPKFRER…QGVDNQAYQA (137 aa). S-palmitoyl cysteine attachment occurs at residues Cys336 and Cys337. Disordered regions lie at residues 346–365 and 376–452; these read DDKD…GETA and MMQK…AYQA. Positions 376-388 are enriched in low complexity; sequence MMQKMQAQQQQQP. The span at 389-440 shows a compositional bias: pro residues; the sequence is AYPPQGYPPQGYPPPPPQGYPPQGYPPQGYPPQGYPPPPQGPPPQGPPPQAA.

Belongs to the G-protein coupled receptor 1 family. Opsin subfamily. Post-translationally, contains one covalently linked retinal chromophore. Upon light absorption, the covalently bound 11-cis-retinal is converted to all-trans-retinal. After hydrolysis of the Schiff base and release of the covalently bound all-trans-retinal, active rhodopsin is regenerated by binding of a fresh molecule of 11-cis-retinal.

It localises to the cell projection. It is found in the rhabdomere membrane. Functionally, photoreceptor required for image-forming vision at low light intensity. Light-induced isomerization of 11-cis to all-trans retinal triggers a conformational change that activates signaling via G-proteins. Signaling mediates the activation of phospholipase C. Subsequent receptor phosphorylation mediates displacement of the bound G-protein alpha subunit by arrestin and terminates signaling. The polypeptide is Rhodopsin (RHO) (Loligo forbesii (Veined squid)).